Here is a 54-residue protein sequence, read N- to C-terminus: Ovomucoid (54 aa).

One can recognise a Kazal-like domain in the interval 4-54 (VDCSDHPKPVCSLEYMPLCGSDSKTYSNKCDFCNAVVESNGTLTLSHFGKC). 3 cysteine pairs are disulfide-bonded: cysteine 6/cysteine 36, cysteine 14/cysteine 33, and cysteine 22/cysteine 54. The N-linked (GlcNAc...) asparagine glycan is linked to asparagine 43.

Its subcellular location is the secreted. This is Ovomucoid from Rhea americana (Greater rhea).